Here is a 435-residue protein sequence, read N- to C-terminus: Type A flavoprotein fprA (435 aa).

The zinc metallo-hydrolase stretch occupies residues 48 to 228; that stretch reads ANGTTYNAYA…PFRSFVAQVL (181 aa). The Fe cation site is built by His-98, Glu-100, Asp-102, His-167, Asp-186, and His-243. In terms of domain architecture, Flavodoxin-like spans 276–415; it reads LLIFYVSAYR…EGRAFGRRLA (140 aa).

The protein in the N-terminal section; belongs to the zinc metallo-hydrolase group 3 family. Homodimer. FMN serves as cofactor. Fe cation is required as a cofactor.

In terms of biological role, low-potential electron donor to a number of redox enzymes. The sequence is that of Type A flavoprotein fprA (fprA) from Rhodobacter capsulatus (Rhodopseudomonas capsulata).